The primary structure comprises 159 residues: Mediator of RNA polymerase II transcription subunit 10 (159 aa).

The disordered stretch occupies residues 54-77; that stretch reads STHTKPQPPSQDDEQKGSANDPLL.

It belongs to the Mediator complex subunit 10 family. In terms of assembly, component of the Mediator complex.

It is found in the nucleus. Functionally, component of the Mediator complex, a coactivator involved in the regulated transcription of nearly all RNA polymerase II-dependent genes. Mediator functions as a bridge to convey information from gene-specific regulatory proteins to the basal RNA polymerase II transcription machinery. Mediator is recruited to promoters by direct interactions with regulatory proteins and serves as a scaffold for the assembly of a functional preinitiation complex with RNA polymerase II and the general transcription factors. This Aspergillus fumigatus (strain ATCC MYA-4609 / CBS 101355 / FGSC A1100 / Af293) (Neosartorya fumigata) protein is Mediator of RNA polymerase II transcription subunit 10 (nut2).